The sequence spans 189 residues: MLLGQLSTLLCLLSGALPTGSGRPEPQSPRPQSWAAANQTWALGPGALPPLVPASALGSWKAFLGLQKARQLGMGRLQRGQDEVAAVTLPLNPQEVIQGMCKAVPFVQVFSRPGCSAIRLRNHLCFGHCSSLYIPGSDPTPLVLCNSCMPARKRWAPVVLWCLTGSSASRRRVKISTMLIEGCHCSPKA.

A signal peptide spans 1-22 (MLLGQLSTLLCLLSGALPTGSG). N-linked (GlcNAc...) asparagine glycosylation is present at Asn38. 4 disulfide bridges follow: Cys101–Cys148, Cys115–Cys162, Cys125–Cys183, and Cys129–Cys185. The CTCK domain maps to 101-186 (CKAVPFVQVF…TMLIEGCHCS (86 aa)).

Belongs to the DAN family. In terms of tissue distribution, expressed in the retina, in inner segments of photoreceptors, at or close to the outer plexiform layer and in the ganglion cell layer (at protein level).

The protein localises to the secreted. In terms of biological role, antagonist of the extracellular signaling protein NODAL, which is required for correct left-right patterning during embryonic development. Antagonist of BMP and TGF-beta signaling. Independently of its role in left-right axis establishment, plays a role during heart development, possibly through the regulation of TGF-beta/Nodal signaling pathway. Displays anti-angiogenic activity by inhibiting endothelial sprouting, migration, and proliferation. Once internalized by endothelial cells, may alter their redox and glycolytic balance. The protein is DAN domain family member 5 (DAND5) of Homo sapiens (Human).